The chain runs to 248 residues: Isoamyl acetate-hydrolyzing esterase 1 homolog (248 aa).

The active-site Nucleophile is Ser24. Lys63 carries the N6-succinyllysine modification. Asp196 (proton donor) is an active-site residue. His199 functions as the Proton acceptor in the catalytic mechanism.

Belongs to the 'GDSL' lipolytic enzyme family. IAH1 subfamily.

Functionally, probable lipase. In Homo sapiens (Human), this protein is Isoamyl acetate-hydrolyzing esterase 1 homolog (IAH1).